The primary structure comprises 75 residues: Large ribosomal subunit protein bL31 (75 aa).

This sequence belongs to the bacterial ribosomal protein bL31 family. Type A subfamily. As to quaternary structure, part of the 50S ribosomal subunit.

Its function is as follows. Binds the 23S rRNA. The chain is Large ribosomal subunit protein bL31 from Chlorobium limicola (strain DSM 245 / NBRC 103803 / 6330).